Consider the following 640-residue polypeptide: Asparagine synthetase domain-containing protein 1 (640 aa).

The For GATase activity role is filled by C2. A Glutamine amidotransferase type-2 domain is found at C2–K184. Residues Q286–K602 form the Asparagine synthetase domain.

The polypeptide is Asparagine synthetase domain-containing protein 1 (ASNSD1) (Bos taurus (Bovine)).